A 127-amino-acid chain; its full sequence is V-type proton ATPase subunit F (127 aa).

The protein belongs to the V-ATPase F subunit family. V-ATPase is a heteromultimeric enzyme made up of two complexes: the ATP-hydrolytic V1 complex and the proton translocation V0 complex. The V1 complex consists of three catalytic AB heterodimers that form a heterohexamer, three peripheral stalks each consisting of EG heterodimers, one central rotor including subunits D and F, and the regulatory subunits C and H. The proton translocation complex V0 consists of the proton transport subunit a, a ring of proteolipid subunits c9c'', rotary subunit d, subunits e and f, and the accessory subunits VhaAC45 and ATP6AP2.

Functionally, subunit of the V1 complex of vacuolar(H+)-ATPase (V-ATPase), a multisubunit enzyme composed of a peripheral complex (V1) that hydrolyzes ATP and a membrane integral complex (V0) that translocates protons. V-ATPase is responsible for acidifying and maintaining the pH of intracellular compartments and in some cell types, is targeted to the plasma membrane, where it is responsible for acidifying the extracellular environment. This chain is V-type proton ATPase subunit F (Vha14), found in Anopheles gambiae (African malaria mosquito).